Consider the following 211-residue polypeptide: Glycerol-3-phosphate acyltransferase (211 aa).

5 helical membrane-spanning segments follow: residues 5–25 (VILG…TGYL), 55–75 (GPGL…ILVA), 85–105 (PVPA…AVLA), 126–146 (VLLA…LVVL), and 168–188 (WFFT…AFVI).

It belongs to the PlsY family. Probably interacts with PlsX.

The protein localises to the cell inner membrane. It catalyses the reaction an acyl phosphate + sn-glycerol 3-phosphate = a 1-acyl-sn-glycero-3-phosphate + phosphate. It participates in lipid metabolism; phospholipid metabolism. In terms of biological role, catalyzes the transfer of an acyl group from acyl-phosphate (acyl-PO(4)) to glycerol-3-phosphate (G3P) to form lysophosphatidic acid (LPA). This enzyme utilizes acyl-phosphate as fatty acyl donor, but not acyl-CoA or acyl-ACP. The chain is Glycerol-3-phosphate acyltransferase from Thermosynechococcus vestitus (strain NIES-2133 / IAM M-273 / BP-1).